The following is a 340-amino-acid chain: Heat-inducible transcription repressor HrcA (340 aa).

It belongs to the HrcA family.

In terms of biological role, negative regulator of class I heat shock genes (grpE-dnaK-dnaJ and groELS operons). Prevents heat-shock induction of these operons. The sequence is that of Heat-inducible transcription repressor HrcA from Burkholderia vietnamiensis (strain G4 / LMG 22486) (Burkholderia cepacia (strain R1808)).